Here is a 125-residue protein sequence, read N- to C-terminus: Probable growth factor FPV211 (125 aa).

The N-terminal stretch at 1–48 (MKEPLIEVKREYNLIKTLTGKKFVVSTSIVVVLLIINMIFYGIRIHEL) is a signal peptide. In terms of domain architecture, EGF-like spans 80 to 120 (LFEKCKSKFNNFCIYGECMNIINLDKKFCICNKGYTGNRCD). 3 cysteine pairs are disulfide-bonded: Cys-84/Cys-97, Cys-92/Cys-108, and Cys-110/Cys-119.

It localises to the secreted. The polypeptide is Probable growth factor FPV211 (Vertebrata (FPV)).